A 352-amino-acid polypeptide reads, in one-letter code: DNA polymerase IV (352 aa).

Residues 6–186 (IIHIDMDAFY…LPLGKIPGAG (181 aa)) form the UmuC domain. Positions 10 and 104 each coordinate Mg(2+). The active site involves glutamate 105.

The protein belongs to the DNA polymerase type-Y family. In terms of assembly, monomer. Mg(2+) serves as cofactor.

The protein resides in the cytoplasm. It carries out the reaction DNA(n) + a 2'-deoxyribonucleoside 5'-triphosphate = DNA(n+1) + diphosphate. In terms of biological role, poorly processive, error-prone DNA polymerase involved in untargeted mutagenesis. Copies undamaged DNA at stalled replication forks, which arise in vivo from mismatched or misaligned primer ends. These misaligned primers can be extended by PolIV. Exhibits no 3'-5' exonuclease (proofreading) activity. May be involved in translesional synthesis, in conjunction with the beta clamp from PolIII. This chain is DNA polymerase IV, found in Neisseria gonorrhoeae (strain ATCC 700825 / FA 1090).